A 361-amino-acid polypeptide reads, in one-letter code: Ferredoxin--NADP reductase 1 (361 aa).

FAD-binding residues include D44, Q52, Y57, A97, F142, D308, and S349.

Belongs to the ferredoxin--NADP reductase type 2 family. As to quaternary structure, homodimer. Requires FAD as cofactor.

It catalyses the reaction 2 reduced [2Fe-2S]-[ferredoxin] + NADP(+) + H(+) = 2 oxidized [2Fe-2S]-[ferredoxin] + NADPH. The chain is Ferredoxin--NADP reductase 1 from Cupriavidus necator (strain ATCC 17699 / DSM 428 / KCTC 22496 / NCIMB 10442 / H16 / Stanier 337) (Ralstonia eutropha).